We begin with the raw amino-acid sequence, 177 residues long: Protein SOB FIVE-LIKE 6 (177 aa).

Positions 14 to 19 match the SOFL-A motif; sequence SGWTMY. Disordered regions lie at residues 37–60 and 78–104; these read ETKQEHDEDSSMVSDASSGPPYYC and KSKSKNKNKNKKKVHEEQGYSERFNSS. The SOFL-B signature appears at 47-56; the sequence is SMVSDASSGP. Basic residues predominate over residues 79-90; it reads SKSKNKNKNKKK.

It belongs to the SOFL plant protein family. In terms of tissue distribution, expressed in seedlings, flowers and siliques. Barely detectable in roots and leaves.

It localises to the cytoplasm. The protein resides in the nucleus. Its function is as follows. Involved in cytokinin-mediated development. This chain is Protein SOB FIVE-LIKE 6, found in Arabidopsis thaliana (Mouse-ear cress).